The sequence spans 319 residues: Taste receptor type 2 member 30 (319 aa).

A topological domain (extracellular) is located at residue Met-1. Residues 2–22 (ITFLPIIFSILIVVIFVIGNF) traverse the membrane as a helical segment. Residues 23–46 (ANGFIALVNSIEWVKRQKISFVDQ) are Cytoplasmic-facing. Residues 47 to 67 (ILTALAVSRVGLLWVLLLHWY) form a helical membrane-spanning segment. Over 68 to 86 (ATQLNPAFYSVEVRITVYN) the chain is Extracellular. Residues 87–107 (VWAVTNHFSSWLATSLSMFYL) traverse the membrane as a helical segment. At 108–126 (LKIANFSNLIFLRIKRRVK) the chain is on the cytoplasmic side. Residues 127–147 (SVVLVILLGPLLFLVCHLFVI) traverse the membrane as a helical segment. Residues 148–178 (NMDETIWTKEYEGNMTWKIKLRSAMYHSNMT) lie on the Extracellular side of the membrane. 2 N-linked (GlcNAc...) asparagine glycosylation sites follow: Asn-161 and Asn-176. Residues 179–199 (LTMLANFVPLTLTLISFLLLI) traverse the membrane as a helical segment. The Cytoplasmic segment spans residues 200-229 (CSLCKHLKKMQLHGKGSQDPSTKVHIKALQ). A helical membrane pass occupies residues 230 to 250 (TVTSFLLLCAIYFLSMIISVC). Topologically, residues 251 to 259 (NLGRLEKQP) are extracellular. The chain crosses the membrane as a helical span at residues 260 to 280 (VFMFCQAIIFSYPSTHPFILI). Residues 281-319 (LGNKKLKQIFLSVLWHVRYWVKDRSLRLHRFTRAALCKG) are Cytoplasmic-facing.

It belongs to the G-protein coupled receptor T2R family.

Its subcellular location is the membrane. Receptor that may play a role in the perception of bitterness and is gustducin-linked. May play a role in sensing the chemical composition of the gastrointestinal content. The activity of this receptor may stimulate alpha gustducin, mediate PLC-beta-2 activation and lead to the gating of TRPM5. The polypeptide is Taste receptor type 2 member 30 (TAS2R30) (Pan troglodytes (Chimpanzee)).